We begin with the raw amino-acid sequence, 640 residues long: 1,4-alpha-glucan branching enzyme GlgB (640 aa).

Aspartate 318 (nucleophile) is an active-site residue. Glutamate 371 functions as the Proton donor in the catalytic mechanism.

This sequence belongs to the glycosyl hydrolase 13 family. GlgB subfamily. In terms of assembly, monomer.

The enzyme catalyses Transfers a segment of a (1-&gt;4)-alpha-D-glucan chain to a primary hydroxy group in a similar glucan chain.. Its pathway is glycan biosynthesis; glycogen biosynthesis. In terms of biological role, catalyzes the formation of the alpha-1,6-glucosidic linkages in glycogen by scission of a 1,4-alpha-linked oligosaccharide from growing alpha-1,4-glucan chains and the subsequent attachment of the oligosaccharide to the alpha-1,6 position. The chain is 1,4-alpha-glucan branching enzyme GlgB from Francisella tularensis subsp. mediasiatica (strain FSC147).